The chain runs to 450 residues: Probable malate:quinone oxidoreductase (450 aa).

This sequence belongs to the MQO family. Requires FAD as cofactor.

The catalysed reaction is (S)-malate + a quinone = a quinol + oxaloacetate. It functions in the pathway carbohydrate metabolism; tricarboxylic acid cycle; oxaloacetate from (S)-malate (quinone route): step 1/1. The chain is Probable malate:quinone oxidoreductase from Helicobacter pylori (strain P12).